Here is a 328-residue protein sequence, read N- to C-terminus: Tryptophan--tRNA ligase (328 aa).

Residues 8–10 (RPT) and 16–17 (GH) contribute to the ATP site. The short motif at 9–17 (PTGKLHIGH) is the 'HIGH' region element. An L-tryptophan-binding site is contributed by Asp136. ATP contacts are provided by residues 148–150 (GED), Leu186, and 193–197 (KMSKS). The 'KMSKS' region signature appears at 193–197 (KMSKS).

The protein belongs to the class-I aminoacyl-tRNA synthetase family. As to quaternary structure, homodimer.

It is found in the cytoplasm. It carries out the reaction tRNA(Trp) + L-tryptophan + ATP = L-tryptophyl-tRNA(Trp) + AMP + diphosphate + H(+). In terms of biological role, catalyzes the attachment of tryptophan to tRNA(Trp). This is Tryptophan--tRNA ligase from Thermotoga maritima (strain ATCC 43589 / DSM 3109 / JCM 10099 / NBRC 100826 / MSB8).